The sequence spans 88 residues: Putative defensin-like protein 256 (88 aa).

The N-terminal stretch at 1–25 (MKSSIFFKLLLLVSLLVVIFRQSYA) is a signal peptide. 3 disulfide bridges follow: Cys30–Cys46, Cys36–Cys53, and Cys40–Cys55.

It belongs to the DEFL family.

The protein localises to the secreted. The protein is Putative defensin-like protein 256 of Arabidopsis thaliana (Mouse-ear cress).